The sequence spans 250 residues: 5-oxoprolinase subunit A (250 aa).

Belongs to the LamB/PxpA family. As to quaternary structure, forms a complex composed of PxpA, PxpB and PxpC.

It catalyses the reaction 5-oxo-L-proline + ATP + 2 H2O = L-glutamate + ADP + phosphate + H(+). Functionally, catalyzes the cleavage of 5-oxoproline to form L-glutamate coupled to the hydrolysis of ATP to ADP and inorganic phosphate. The sequence is that of 5-oxoprolinase subunit A from Nocardia farcinica (strain IFM 10152).